An 86-amino-acid chain; its full sequence is Large ribosomal subunit protein bL31 (86 aa).

The interval 65-86 is disordered; that stretch reads YGMGSANSATSKEQKEEKDSNK. Over residues 76-86 the composition is skewed to basic and acidic residues; the sequence is KEQKEEKDSNK.

This sequence belongs to the bacterial ribosomal protein bL31 family. Type A subfamily. Part of the 50S ribosomal subunit.

Functionally, binds the 23S rRNA. The protein is Large ribosomal subunit protein bL31 of Prochlorococcus marinus (strain MIT 9312).